Consider the following 199-residue polypeptide: Recombination protein RecR (199 aa).

A C4-type zinc finger spans residues 57-72; that stretch reads CQQCRTFTEQNLCAIC. The region spanning 81 to 176 is the Toprim domain; that stretch reads GMICVVEMPV…KVSRIAHGVP (96 aa).

It belongs to the RecR family.

Its function is as follows. May play a role in DNA repair. It seems to be involved in an RecBC-independent recombinational process of DNA repair. It may act with RecF and RecO. The chain is Recombination protein RecR from Psychromonas ingrahamii (strain DSM 17664 / CCUG 51855 / 37).